The following is a 743-amino-acid chain: Threonine--tRNA ligase (743 aa).

Over residues 1–15 (MSADSPSSPASSQAA) the composition is skewed to low complexity. The disordered stretch occupies residues 1–30 (MSADSPSSPASSQAAEVQVRLPDGSLKTQP). The 64-residue stretch at 13–76 (QAAEVQVRLP…GEIADDENVV (64 aa)) folds into the TGS domain. The segment at 264–619 (DHRVLGKQHG…LIEHFAGAFP (356 aa)) is catalytic. Residues 354-404 (AWSTRLDKDDLSKDDEDKLIAAAEVFGVKLPDYKPSASNDAKKDVLHRWQL) are insert. Residues Cys416, His467, and His596 each coordinate Zn(2+).

It belongs to the class-II aminoacyl-tRNA synthetase family. In terms of assembly, homodimer. Zn(2+) is required as a cofactor.

The protein localises to the cytoplasm. It carries out the reaction tRNA(Thr) + L-threonine + ATP = L-threonyl-tRNA(Thr) + AMP + diphosphate + H(+). Its function is as follows. Catalyzes the attachment of threonine to tRNA(Thr) in a two-step reaction: L-threonine is first activated by ATP to form Thr-AMP and then transferred to the acceptor end of tRNA(Thr). Also edits incorrectly charged L-seryl-tRNA(Thr). The chain is Threonine--tRNA ligase from Rhodopirellula baltica (strain DSM 10527 / NCIMB 13988 / SH1).